Here is a 350-residue protein sequence, read N- to C-terminus: Serine-threonine kinase receptor-associated protein (350 aa).

WD repeat units follow at residues 12 to 56, 57 to 96, 98 to 137, 141 to 179, 180 to 212, 221 to 262, and 263 to 302; these read GHTR…GTFL, GHKGAVWGATLNKDATKAATAAADFTAKVWDAVSGDELMT, AHKHIVKTVDFTQDSNYLLTGGQDKLLRIYDLNKPEAEPK, GHTSGIKKALWCSEDKQILSADDKTVRLWDHATMTEVKS, LNFNMSVSSMEYIPEGEILVITYGRSIAFHSAV, EAPA…ESYK, and GHFGPIHCVRFSPDGELYASGSEDGTLRLWQTVVGKTYGL. Phosphoserine is present on residues S312, S335, and S338. A disordered region spans residues 326 to 350; sequence AEEELEEIASENSDSIYSSTPEVKA. The span at 337–350 shows a compositional bias: polar residues; that stretch reads NSDSIYSSTPEVKA. Residue Y342 is modified to Phosphotyrosine.

The protein belongs to the WD repeat STRAP family. In terms of assembly, part of the core SMN complex that contains SMN1, GEMIN2/SIP1, DDX20/GEMIN3, GEMIN4, GEMIN5, GEMIN6, GEMIN7, GEMIN8 and STRAP/UNRIP. Part of the SMN-Sm complex that contains SMN1, GEMIN2/SIP1, DDX20/GEMIN3, GEMIN4, GEMIN5, GEMIN6, GEMIN7, GEMIN8, STRAP/UNRIP and the Sm proteins SNRPB, SNRPD1, SNRPD2, SNRPD3, SNRPE, SNRPF and SNRPG. Interacts directly with GEMIN6 and GEMIN7. Associates with the SMN complex in the cytoplasm but not in the nucleus. Also interacts with CSDE1/UNR and MAWBP. Interacts with PDPK1. Interacts with TRIM48.

It is found in the cytoplasm. The protein resides in the nucleus. Its function is as follows. The SMN complex catalyzes the assembly of small nuclear ribonucleoproteins (snRNPs), the building blocks of the spliceosome, and thereby plays an important role in the splicing of cellular pre-mRNAs. Most spliceosomal snRNPs contain a common set of Sm proteins SNRPB, SNRPD1, SNRPD2, SNRPD3, SNRPE, SNRPF and SNRPG that assemble in a heptameric protein ring on the Sm site of the small nuclear RNA to form the core snRNP (Sm core). In the cytosol, the Sm proteins SNRPD1, SNRPD2, SNRPE, SNRPF and SNRPG are trapped in an inactive 6S pICln-Sm complex by the chaperone CLNS1A that controls the assembly of the core snRNP. To assemble core snRNPs, the SMN complex accepts the trapped 5Sm proteins from CLNS1A forming an intermediate. Binding of snRNA inside 5Sm triggers eviction of the SMN complex, thereby allowing binding of SNRPD3 and SNRPB to complete assembly of the core snRNP. STRAP plays a role in the cellular distribution of the SMN complex. Negatively regulates TGF-beta signaling but positively regulates the PDPK1 kinase activity by enhancing its autophosphorylation and by significantly reducing the association of PDPK1 with 14-3-3 protein. The polypeptide is Serine-threonine kinase receptor-associated protein (Strap) (Rattus norvegicus (Rat)).